The chain runs to 329 residues: MQGKIALEEHFAIPETLNDSAGFVPGTYWDELQARLLDIQDVRLKLMDEHNIETMILSLNAPAVQAIPERERAIDIARRANDVLAEECAKRPDRFRGFAALPLQDPDAAAEELRRCVTELGFVGALVNGFSQSATVDGGSTPLYYDLPRYRPFWAEVERLDVPFYLHPRNPLNQDARIYEGHPWLLGPTWAFAQETAVHALRLMASGLFDEHPGLRIVLGHMGEGIPAMLWRIDHRNAWVDVPPAYPAKRRMVDYFTENFFVTTSGNFRTQTLIDLLLELGSERVMFSTDWPFENINHAAEWFDAASISEADRLKIGRTNAATLFKLDR.

4 residues coordinate Zn(2+): Glu-8, His-10, His-167, and Asp-290. Asp-290 is a catalytic residue.

This sequence belongs to the metallo-dependent hydrolases superfamily. ACMSD family. Requires Zn(2+) as cofactor.

The catalysed reaction is 2,6-dihydroxybenzoate + H(+) = resorcinol + CO2. It functions in the pathway aromatic compound metabolism. In terms of biological role, involved in the gamma-resorcylate (2,6-dihydroxybenzoate) catabolism. Catalyzes the reversible decarboxylation of gamma-resorcylate to resorcinol. The protein is Gamma-resorcylate decarboxylase of Rhodococcus jostii (strain RHA1).